A 649-amino-acid polypeptide reads, in one-letter code: Protein WHI4 (649 aa).

Residues Ser-22 and Ser-206 each carry the phosphoserine modification. Disordered stretches follow at residues 196–217 and 228–247; these read EHVS…SSAQ and ISYG…KPRP. Polar residues predominate over residues 228–238; sequence ISYGKTSSSPL. Phosphoserine is present on residues Ser-258 and Ser-283. Disordered stretches follow at residues 438–461 and 604–649; these read LDLN…SIFN and QLPH…YGKS. The RRM domain occupies 533–625; that stretch reads NTLYVGNLPP…GGIRLSFSKN (93 aa). Over residues 631–649 the composition is skewed to polar residues; that stretch reads GSNSRSKSGYSFNGSYGKS.

Post-translationally, phosphorylated by PKA in vitro.

It localises to the cytoplasm. Functionally, has a partially redundant function to WHI3, a dosage-dependent modulator of cell size. In Saccharomyces cerevisiae (strain ATCC 204508 / S288c) (Baker's yeast), this protein is Protein WHI4 (WHI4).